The following is a 333-amino-acid chain: Fructose-1,6-bisphosphatase class 1 (333 aa).

E89, D110, L112, and D113 together coordinate Mg(2+). Substrate contacts are provided by residues 113 to 116, N206, Y239, 257 to 259, and K269; these read DGSS and YLY. E275 is a binding site for Mg(2+).

The protein belongs to the FBPase class 1 family. As to quaternary structure, homotetramer. Requires Mg(2+) as cofactor.

The protein localises to the cytoplasm. It catalyses the reaction beta-D-fructose 1,6-bisphosphate + H2O = beta-D-fructose 6-phosphate + phosphate. Its pathway is carbohydrate biosynthesis; gluconeogenesis. This chain is Fructose-1,6-bisphosphatase class 1, found in Sodalis glossinidius (strain morsitans).